Consider the following 400-residue polypeptide: Elongation factor Tu (400 aa).

Positions lysine 10 to glutamate 209 constitute a tr-type G domain. A G1 region spans residues glycine 19–threonine 26. Residue glycine 19 to threonine 26 coordinates GTP. Threonine 26 is a binding site for Mg(2+). The tract at residues glycine 60 to asparagine 64 is G2. The tract at residues aspartate 81–glycine 84 is G3. GTP-binding positions include aspartate 81 to histidine 85 and asparagine 136 to aspartate 139. Residues asparagine 136–aspartate 139 are G4. The G5 stretch occupies residues serine 174–leucine 176.

This sequence belongs to the TRAFAC class translation factor GTPase superfamily. Classic translation factor GTPase family. EF-Tu/EF-1A subfamily. In terms of assembly, monomer.

It localises to the cytoplasm. The enzyme catalyses GTP + H2O = GDP + phosphate + H(+). Its function is as follows. GTP hydrolase that promotes the GTP-dependent binding of aminoacyl-tRNA to the A-site of ribosomes during protein biosynthesis. The protein is Elongation factor Tu of Desulforamulus reducens (strain ATCC BAA-1160 / DSM 100696 / MI-1) (Desulfotomaculum reducens).